We begin with the raw amino-acid sequence, 514 residues long: 1,25-dihydroxyvitamin D(3) 24-hydroxylase, mitochondrial (514 aa).

Residues 1 to 35 constitute a mitochondrion transit peptide; the sequence is MSCPIDKRRTLIAFLRRLRDLGQPPRSVTSKASAS. Cys462 lines the heme pocket.

Belongs to the cytochrome P450 family. Requires heme as cofactor.

The protein localises to the mitochondrion. It catalyses the reaction calcitriol + 2 reduced [adrenodoxin] + O2 + 2 H(+) = calcitetrol + 2 oxidized [adrenodoxin] + H2O. It carries out the reaction calcitetrol + 2 reduced [adrenodoxin] + O2 + 2 H(+) = (1S)-1,25-dihydroxy-24-oxocalciol + 2 oxidized [adrenodoxin] + 2 H2O. The enzyme catalyses (1S)-1,25-dihydroxy-24-oxocalciol + 2 reduced [adrenodoxin] + O2 + 2 H(+) = (1S)-1,23,25-trihydroxy-24-oxocalciol + 2 oxidized [adrenodoxin] + H2O. The catalysed reaction is (1S)-1,23-dihydroxy-24,25,26,27-tetranorcalciol + 2 reduced [adrenodoxin] + O2 + 2 H(+) = (1S)-1-hydroxy-23-oxo-24,25,26,27-tetranorcalciol + 2 oxidized [adrenodoxin] + 2 H2O. It catalyses the reaction (1S)-1-hydroxy-23-oxo-24,25,26,27-tetranorcalciol + 2 reduced [adrenodoxin] + O2 + H(+) = calcitroate + 2 oxidized [adrenodoxin] + H2O. It carries out the reaction calcidiol + 2 reduced [adrenodoxin] + O2 + 2 H(+) = secalciferol + 2 oxidized [adrenodoxin] + H2O. The enzyme catalyses secalciferol + 2 reduced [adrenodoxin] + O2 + 2 H(+) = 25-hydroxy-24-oxocalciol + 2 oxidized [adrenodoxin] + 2 H2O. The catalysed reaction is 25-hydroxy-24-oxocalciol + 2 reduced [adrenodoxin] + O2 + 2 H(+) = 23S,25-dihydroxy-24-oxocholecalciferol + 2 oxidized [adrenodoxin] + H2O. It catalyses the reaction 20S,23-dihydroxycholecalciferol + 2 reduced [adrenodoxin] + O2 + 2 H(+) = 20S,23,25-trihydroxycholecalciferol + 2 oxidized [adrenodoxin] + H2O. It carries out the reaction 20S,23-dihydroxycholecalciferol + 2 reduced [adrenodoxin] + O2 + 2 H(+) = 20S,23,24-trihydroxycholecalciferol + 2 oxidized [adrenodoxin] + H2O. The enzyme catalyses 20S-hydroxycholecalciferol + 2 reduced [adrenodoxin] + O2 + 2 H(+) = 20S,25-dihydroxycholecalciferol + 2 oxidized [adrenodoxin] + H2O. The catalysed reaction is 20S-hydroxycholecalciferol + 2 reduced [adrenodoxin] + O2 + 2 H(+) = 20S,24S-dihydroxycholecalciferol + 2 oxidized [adrenodoxin] + H2O. It catalyses the reaction 20S-hydroxycholecalciferol + 2 reduced [adrenodoxin] + O2 + 2 H(+) = 20S,24R-dihydroxycholecalciferol + 2 oxidized [adrenodoxin] + H2O. A cytochrome P450 monooxygenase with a key role in vitamin D catabolism and calcium homeostasis. Via C24-oxidation pathway, catalyzes the inactivation of both the vitamin D precursor calcidiol (25-hydroxyvitamin D(3)) and the active hormone calcitriol (1-alpha,25-dihydroxyvitamin D(3)). With initial hydroxylation at C-24 (via C24-oxidation pathway), performs a sequential 6-step oxidation of calcitriol leading to the formation of the biliary metabolite calcitroic acid. Hydroxylates at C-24 or C-25 other vitamin D active metabolites, such as CYP11A1-derived secosteroids 20S-hydroxycholecalciferol and 20S,23-dihydroxycholecalciferol. Mechanistically, uses molecular oxygen inserting one oxygen atom into a substrate, and reducing the second into a water molecule, with two electrons provided by NADPH via FDXR/adrenodoxin reductase and FDX1/adrenodoxin. This is 1,25-dihydroxyvitamin D(3) 24-hydroxylase, mitochondrial (Cyp24a1) from Rattus norvegicus (Rat).